A 341-amino-acid polypeptide reads, in one-letter code: HTH-type transcriptional repressor PurR (341 aa).

The 55-residue stretch at 2–56 (ATIKDVAKHAGVSTTTVSHVINKTRFVAENTKAAVWAAIKELHYSPSAVARSLKV) folds into the HTH lacI-type domain. The segment at residues 4-23 (IKDVAKHAGVSTTTVSHVIN) is a DNA-binding region (H-T-H motif). A DNA-binding region spans residues 48–56 (SAVARSLKV). Hypoxanthine-binding residues include Tyr-73, Arg-190, Thr-192, Phe-221, and Asp-275.

As to quaternary structure, homodimer.

Its pathway is purine metabolism; purine nucleotide biosynthesis [regulation]. Is the main repressor of the genes involved in the de novo synthesis of purine nucleotides, regulating purB, purC, purEK, purF, purHD, purL, purMN and guaBA expression. PurR is allosterically activated to bind its cognate DNA by binding the purine corepressors, hypoxanthine or guanine, thereby effecting transcription repression. In Yersinia pseudotuberculosis serotype O:1b (strain IP 31758), this protein is HTH-type transcriptional repressor PurR.